We begin with the raw amino-acid sequence, 337 residues long: uncharacterized protein (337 aa).

2 helical membrane-spanning segments follow: residues 4–24 and 26–46; these read FIFFFKNYCYISGSMLLFSLI and LLLWIISLYCVGLVFWILFVL.

Belongs to the plectrovirus ORF2 family.

Its subcellular location is the host membrane. This is an uncharacterized protein from Spiroplasma virus SpV1-R8A2 B (SpV1).